Consider the following 285-residue polypeptide: UPF0354 protein SA1564 (285 aa).

It belongs to the UPF0354 family.

This is UPF0354 protein SA1564 from Staphylococcus aureus (strain N315).